We begin with the raw amino-acid sequence, 967 residues long: MQRAVPEGFGRRKLGSDMGNAERAPGSRSFGPVPTLLLLAAALLAVSDALGRPSEEDEELVVPELERAPGHGTTRLRLHAFDQQLDLELRPDSSFLAPGFTLQNVGRKSGSETPLPETDLAHCFYSGTVNGDPSSAAALSLCEGVRGAFYLLGEAYFIQPLPAASERLATAAPGEKPPAPLQFHLLRRNRQGDVGGTCGVVDDEPRPTGKAETEDEDEGTEGEDEGAQWSPQDPALQGVGQPTGTGSIRKKRFVSSHRYVETMLVADQSMAEFHGSGLKHYLLTLFSVAARLYKHPSIRNSVSLVVVKILVIHDEQKGPEVTSNAALTLRNFCNWQKQHNPPSDRDAEHYDTAILFTRQDLCGSQTCDTLGMADVGTVCDPSRSCSVIEDDGLQAAFTTAHELGHVFNMPHDDAKQCASLNGVNQDSHMMASMLSNLDHSQPWSPCSAYMITSFLDNGHGECLMDKPQNPIQLPGDLPGTSYDANRQCQFTFGEDSKHCPDAASTCSTLWCTGTSGGVLVCQTKHFPWADGTSCGEGKWCINGKCVNKTDRKHFDTPFHGSWGMWGPWGDCSRTCGGGVQYTMRECDNPVPKNGGKYCEGKRVRYRSCNLEDCPDNNGKTFREEQCEAHNEFSKASFGSGPAVEWIPKYAGVSPKDRCKLICQAKGIGYFFVLQPKVVDGTPCSPDSTSVCVQGQCVKAGCDRIIDSKKKFDKCGVCGGNGSTCKKISGSVTSAKPGYHDIITIPTGATNIEVKQRNQRGSRNNGSFLAIKAADGTYILNGDYTLSTLEQDIMYKGVVLRYSGSSAALERIRSFSPLKEPLTIQVLTVGNALRPKIKYTYFVKKKKESFNAIPTFSAWVIEEWGECSKSCELGWQRRLVECRDINGQPASECAKEVKPASTRPCADHPCPQWQLGEWSSCSKTCGKGYKKRSLKCLSHDGGVLSHESCDPLKKPKHFIDFCTMAECS.

2 disordered regions span residues 1–27 (MQRA…APGS) and 192–250 (GDVG…SIRK). The N-terminal stretch at 1 to 49 (MQRAVPEGFGRRKLGSDMGNAERAPGSRSFGPVPTLLLLAAALLAVSDA) is a signal peptide. The propeptide occupies 50–252 (LGRPSEEDEE…TGTGSIRKKR (203 aa)). The Cysteine switch signature appears at 196-203 (GTCGVVDD). Residue Cys-198 participates in Zn(2+) binding. The span at 203–212 (DEPRPTGKAE) shows a compositional bias: basic and acidic residues. Positions 213–226 (TEDEDEGTEGEDEG) are enriched in acidic residues. The region spanning 258–467 (RYVETMLVAD…GHGECLMDKP (210 aa)) is the Peptidase M12B domain. Residues Glu-261, Asp-344, and Asp-351 each contribute to the Ca(2+) site. Intrachain disulfides connect Cys-333–Cys-385, Cys-362–Cys-367, Cys-379–Cys-462, and Cys-417–Cys-446. His-401 contacts Zn(2+). Glu-402 is a catalytic residue. Residues His-405 and His-411 each contribute to the Zn(2+) site. Ca(2+)-binding residues include Cys-462 and Asp-465. Positions 476 to 559 (DLPGTSYDAN…DRKHFDTPFH (84 aa)) constitute a Disintegrin domain. 4 disulfide bridges follow: Cys-488/Cys-511, Cys-499/Cys-521, Cys-506/Cys-540, and Cys-534/Cys-545. Residue Asn-547 is glycosylated (N-linked (GlcNAc...) asparagine). The TSP type-1 1 domain maps to 559–614 (HGSWGMWGPWGDCSRTCGGGVQYTMRECDNPVPKNGGKYCEGKRVRYRSCNLEDCP). Cystine bridges form between Cys-571/Cys-608, Cys-575/Cys-613, and Cys-586/Cys-598. Asn-720 and Asn-764 each carry an N-linked (GlcNAc...) asparagine glycan. The segment at 725-849 (KKISGSVTSA…YFVKKKKESF (125 aa)) is spacer. 2 consecutive TSP type-1 domains span residues 854 to 905 (TFSA…RPCA) and 908 to 967 (PCPQ…AECS).

Zn(2+) serves as cofactor. Post-translationally, the precursor is cleaved by a furin endopeptidase. In terms of processing, glycosylated. Can be O-fucosylated by POFUT2 on a serine or a threonine residue found within the consensus sequence C1-X(2)-(S/T)-C2-G of the TSP type-1 repeat domains where C1 and C2 are the first and second cysteine residue of the repeat, respectively. Fucosylated repeats can then be further glycosylated by the addition of a beta-1,3-glucose residue by the glucosyltransferase, B3GALTL. Fucosylation mediates the efficient secretion of ADAMTS family members. Can also be C-glycosylated with one or two mannose molecules on tryptophan residues within the consensus sequence W-X-X-W of the TPRs, and N-glycosylated. These other glycosylations can also facilitate secretion.

The protein resides in the secreted. It localises to the extracellular space. The protein localises to the extracellular matrix. Its function is as follows. Metalloprotease which cleaves aggrecan, a cartilage proteoglycan, at the '1938-Glu-|-Leu-1939' site (within the chondroitin sulfate attachment domain), and may be involved in its turnover. Also cleaves COMP. Has angiogenic inhibitor activity. May play a critical role in follicular rupture. This is A disintegrin and metalloproteinase with thrombospondin motifs 1 (ADAMTS1) from Homo sapiens (Human).